We begin with the raw amino-acid sequence, 606 residues long: Sporulation kinase A (606 aa).

The PAS 1 domain occupies 3-73 (QDTQHVKPLQ…SYFYNEHHLM (71 aa)). The PAC 1 domain occupies 77–116 (FRFIKKDHTIVWVEAAVEIVTTRAERTEREIILKMKVLEE). One can recognise a PAS 2 domain in the interval 140 to 214 (YITDDYERLV…IRMQKGMEVG (75 aa)). In terms of domain architecture, PAC 2 spans 218 to 255 (QTWKRLDGTPVHLEVKASPTVYKNQQAELLLLIDISSR). The region spanning 265–335 (SRERYQLLIQ…ERIQNIAEQK (71 aa)) is the PAS 3 domain. The Histidine kinase domain occupies 402–606 (GIAHEIRNPL…TAFKISFPKK (205 aa)). At histidine 405 the chain carries Phosphohistidine; by autocatalysis.

It carries out the reaction ATP + protein L-histidine = ADP + protein N-phospho-L-histidine.. Phosphorylates the sporulation-regulatory proteins spo0A and spo0F. It also autophosphorylates in the presence of ATP. This Bacillus subtilis (strain 168) protein is Sporulation kinase A (kinA).